Consider the following 475-residue polypeptide: Bifunctional aspartate aminotransferase and glutamate/aspartate-prephenate aminotransferase (475 aa).

A chloroplast-targeting transit peptide spans Met-1–Met-55. L-aspartate is bound by residues Gly-107, Trp-193, and Asn-243. Residue Lys-306 is modified to N6-(pyridoxal phosphate)lysine. Residue Arg-445 coordinates L-aspartate.

This sequence belongs to the class-I pyridoxal-phosphate-dependent aminotransferase family. Homodimer. Pyridoxal 5'-phosphate serves as cofactor.

The protein resides in the plastid. It localises to the chloroplast. The enzyme catalyses L-aspartate + 2-oxoglutarate = oxaloacetate + L-glutamate. It catalyses the reaction L-arogenate + oxaloacetate = prephenate + L-aspartate. The catalysed reaction is L-arogenate + 2-oxoglutarate = prephenate + L-glutamate. It participates in amino-acid biosynthesis; L-phenylalanine biosynthesis; L-arogenate from prephenate (L-Asp route): step 1/1. Its pathway is amino-acid biosynthesis; L-phenylalanine biosynthesis; L-arogenate from prephenate (L-Glu route): step 1/1. Prokaryotic-type aspartate aminotransferase. Also has a prenate transaminase activity. Involved in the aromatic amino acids biosynthesis pathway via the arogenate route. Required for the transamination of prephenate into arogenate. Required for early development of the embryo. The protein is Bifunctional aspartate aminotransferase and glutamate/aspartate-prephenate aminotransferase (PAT) of Arabidopsis thaliana (Mouse-ear cress).